The sequence spans 622 residues: Kinesin-like protein KIFC1 (622 aa).

Positions 1 to 88 are disordered; sequence MKEALEPAKK…KRPGKRPDWD (88 aa). A compositionally biased stretch (polar residues) spans 32–41; it reads SSLSQPQGPT. Residues 95–264 are a coiled coil; it reads DLTEELKCYR…QELKGNIRVF (170 aa). One can recognise a Kinesin motor domain in the interval 260 to 612; it reads NIRVFCRVRP…LRFASKVNQC (353 aa). Residues 279–323 form a disordered region; that stretch reads PGFLLFPHGPAGPSDPPTRLSLSRSDDRRSTLTRAPAPTTRHDFS. At threonine 309 the chain carries Phosphothreonine. 360–367 lines the ATP pocket; that stretch reads GQTGSGKT.

It belongs to the TRAFAC class myosin-kinesin ATPase superfamily. Kinesin family. NCD subfamily. Binds NUBP1 and NUBP2. Interacts with PPP1R42.

The protein resides in the nucleus. It localises to the cytoplasm. Its subcellular location is the cytoskeleton. The protein localises to the microtubule organizing center. It is found in the centrosome. The protein resides in the spindle. It localises to the early endosome. Functionally, minus end-directed microtubule-dependent motor required for bipolar spindle formation. May contribute to movement of early endocytic vesicles. Regulates cilium formation and structure. This chain is Kinesin-like protein KIFC1, found in Cricetulus griseus (Chinese hamster).